A 342-amino-acid chain; its full sequence is S-adenosylmethionine:tRNA ribosyltransferase-isomerase (342 aa).

Belongs to the QueA family. Monomer.

Its subcellular location is the cytoplasm. It carries out the reaction 7-aminomethyl-7-carbaguanosine(34) in tRNA + S-adenosyl-L-methionine = epoxyqueuosine(34) in tRNA + adenine + L-methionine + 2 H(+). It functions in the pathway tRNA modification; tRNA-queuosine biosynthesis. In terms of biological role, transfers and isomerizes the ribose moiety from AdoMet to the 7-aminomethyl group of 7-deazaguanine (preQ1-tRNA) to give epoxyqueuosine (oQ-tRNA). The chain is S-adenosylmethionine:tRNA ribosyltransferase-isomerase from Campylobacter jejuni subsp. jejuni serotype O:23/36 (strain 81-176).